The sequence spans 222 residues: Fibrillarin-like rRNA/tRNA 2'-O-methyltransferase (222 aa).

S-adenosyl-L-methionine is bound by residues 86–87 (TT), 104–105 (EV), 129–130 (DA), and 149–152 (DISQ).

It belongs to the methyltransferase superfamily. Fibrillarin family. In terms of assembly, interacts with nop5. Component of box C/D small ribonucleoprotein (sRNP) particles that contain rpl7ae, FlpA and nop5, plus a guide RNA.

Functionally, involved in pre-rRNA and tRNA processing. Utilizes the methyl donor S-adenosyl-L-methionine to catalyze the site-specific 2'-hydroxyl methylation of ribose moieties in rRNA and tRNA. Site specificity is provided by a guide RNA that base pairs with the substrate. Methylation occurs at a characteristic distance from the sequence involved in base pairing with the guide RNA. The protein is Fibrillarin-like rRNA/tRNA 2'-O-methyltransferase of Thermoplasma volcanium (strain ATCC 51530 / DSM 4299 / JCM 9571 / NBRC 15438 / GSS1).